We begin with the raw amino-acid sequence, 99 residues long: Large ribosomal subunit protein bL27 (99 aa).

The propeptide occupies 1–12 (MMINNLEALKLF). The interval 15–36 (HKGGGSTANGRNSAGRRLGAKR) is disordered.

It belongs to the bacterial ribosomal protein bL27 family. Post-translationally, the N-terminus is cleaved by ribosomal processing cysteine protease Prp.

This Lactobacillus johnsonii (strain CNCM I-12250 / La1 / NCC 533) protein is Large ribosomal subunit protein bL27.